The chain runs to 363 residues: Flagellar P-ring protein (363 aa).

The first 20 residues, 1–20, serve as a signal peptide directing secretion; it reads MKYRLIVALAMLVLSLPSQA.

This sequence belongs to the FlgI family. The basal body constitutes a major portion of the flagellar organelle and consists of four rings (L,P,S, and M) mounted on a central rod.

It is found in the periplasm. The protein resides in the bacterial flagellum basal body. In terms of biological role, assembles around the rod to form the L-ring and probably protects the motor/basal body from shearing forces during rotation. In Shewanella sp. (strain ANA-3), this protein is Flagellar P-ring protein.